A 403-amino-acid chain; its full sequence is MDWWINARIATLDPDAQHAYGLLESHALGVAHGKVEAIVPMSEWDGDASDNITDANGRLITPGLVDCHTHLVYGGDRAAEFEMRLQGVSYADIAKQGGGIISTVRATRAATEKELLQQSEKRLLALLREGVTTVEIKSGYGLDLESELKMLHVARRLGQRYPVNVRTTLLAAHALPPEYAGRSDDYISWICEEALPVAHEQKLADAVDVFCESIAFTPEQCRRVFEAAQKLGLPVKGHMEQLTLSGGSALAAEFNALSVDHVEYLDEASVQAIAASGTVATLLPGAFYFLRETQRPPMELLRKHKVPMALATDLNPGSCPLASMRLMMNMGCTFFGMTPEETLAGVTRHGAKALGMQDRIGHLAPGMAADFIVWDCQHPAQLSYEFGVTGPHQRVFHGEIHNV.

Fe(3+) contacts are provided by His-68 and His-70. 2 residues coordinate Zn(2+): His-68 and His-70. Arg-77, Tyr-140, and His-173 together coordinate 4-imidazolone-5-propanoate. Tyr-140 is a binding site for N-formimidoyl-L-glutamate. His-238 provides a ligand contact to Fe(3+). His-238 is a Zn(2+) binding site. Gln-241 is a 4-imidazolone-5-propanoate binding site. Asp-313 lines the Fe(3+) pocket. Asp-313 provides a ligand contact to Zn(2+). Residues Asn-315 and Gly-317 each contribute to the N-formimidoyl-L-glutamate site. 4-imidazolone-5-propanoate is bound at residue Ser-318.

Belongs to the metallo-dependent hydrolases superfamily. HutI family. It depends on Zn(2+) as a cofactor. Fe(3+) serves as cofactor.

The protein resides in the cytoplasm. It catalyses the reaction 4-imidazolone-5-propanoate + H2O = N-formimidoyl-L-glutamate. It participates in amino-acid degradation; L-histidine degradation into L-glutamate; N-formimidoyl-L-glutamate from L-histidine: step 3/3. In terms of biological role, catalyzes the hydrolytic cleavage of the carbon-nitrogen bond in imidazolone-5-propanoate to yield N-formimidoyl-L-glutamate. It is the third step in the universal histidine degradation pathway. The protein is Imidazolonepropionase of Hahella chejuensis (strain KCTC 2396).